The chain runs to 988 residues: Protein argonaute 10 (988 aa).

The segment covering 1-11 has biased composition (basic and acidic residues); the sequence is MPIRQMKDSSE. A disordered region spans residues 1 to 103; sequence MPIRQMKDSS…PPSQTTSSAV (103 aa). Low complexity predominate over residues 41–57; that stretch reads PVTVTTPATVTQSQASS. Residues 64-73 are compositionally biased toward basic residues; sequence NRSRRRNRGG. One can recognise a PAZ domain in the interval 338-451; that stretch reads PVIEFVAQLL…LPMEACKIVE (114 aa). In terms of domain architecture, Piwi spans 625 to 946; the sequence is LLLAILPDNN…AAFRARFYLE (322 aa).

Belongs to the argonaute family. Ago subfamily. As to quaternary structure, interacts with GATA18/HAN and KNAT1/BP. Interacts with RICE1 and RICE2 that act as cofactors. In terms of tissue distribution, expressed in roots, stems, leaves, developing embryo, siliques, inflorescences, provascular tissue, shoot apical meristem (SAM) and adaxial (upper) sides of lateral organ primordia. Observed in the floral meristem, the adaxial side of sepal primordia, and the provascular tissue.

Its subcellular location is the cytoplasm. In terms of biological role, involved in RNA-mediated post-transcriptional gene silencing (PTGS). Main component of the RNA-induced silencing complex (RISC) that binds to a short guide RNA such as a microRNA (miRNA) or small interfering RNA (siRNA). RISC uses the mature miRNA or siRNA as a guide for slicer-directed cleavage of homologous mRNAs to repress gene expression. Required for reliable formation of primary and axillary shoot apical meristems. Specifies leaf adaxial identity by repressing the miR165 and miR166 microRNAs in the embryonic shoot apex, in the shoot apical meristem (SAM) and leaf. Represses the microRNA miR398 which targets CCS1 chaperone mRNAs for translational inhibition. Acts as a negative regulator of AGO1 protein level. Like AGO1, is required for stem cell function and organ polarity. Unlike AGO1, is not subjected to small RNA-mediated repression itself. Essential for multiple processes in development. Coregulates, with GATA18/HAN, the shoot apical meristem (SAM) organization. The chain is Protein argonaute 10 from Arabidopsis thaliana (Mouse-ear cress).